A 1029-amino-acid chain; its full sequence is Protein STABILIZED1 (1029 aa).

A Ubiquitin-like domain is found at 1-85 (MVFLSIPNGK…VIIHVLLLGG (85 aa)). A Glycyl lysine isopeptide (Gly-Lys) (interchain with K-? in acceptor proteins) cross-link involves residue G85. Residues 142–170 (AAPGVGRGAGKPSEAEAEDDEEAEEKRYD) are disordered. Positions 210-243 (DSRRKDRREAKLKEEIEKYRASNPKITEQFADLK) form a coiled coil. HAT repeat units follow at residues 367-399 (YDRNRARLLYKSLTQSNPKNPNGWIAAARVEEV), 401-431 (GKIKAARFQIQRGCEECPKNEDVWLEACRLA), 432-462 (NPEDAKGVIAKGVKLIPNSVKLWLEAAKLEH), 463-494 (DVENKSRVLRKGLEHIPDSVRLWKAVVELANE), 496-524 (DARILLHRAVECCPLHLELWVALARLETY), 526-554 (ESKKVLNKAREKLPKEPAIWITAAKLEEA), 639-671 (GSIETARAIYAHALSVFLTKKSIWLKAAQLEKS), 673-705 (GSRESLDALLRKAVTYVPQAEVLWLMGAKEKWL), 707-739 (GDVPAARAILQEAYAAIPNSEEIWLAAFKLEFE), 741-772 (KEPERARMLLAKARERGGTERVWMKSAIVERE), 774-806 (GNVEEERRLLNEGLKQFPTFFKLWLMLGQLEER), 808-840 (KHLEQARKAYDTGLKHCPHCIPLWLSLADLEEK), 842-874 (NGLNKARAILTTARKKNPGGAELWLAAIRAELR), 876-908 (DNKREAEHLMSKALQDCPKSGILWAADIEMAPR), and 940-972 (KKVEKARAWFERAVTVGPDIGDFWALFYKFELQ). One copy of the TPR 1 repeat lies at 625–658 (KRTWVADADECKKRGSIETARAIYAHALSVFLTK). The TPR 2 repeat unit spans residues 794-827 (FKLWLMLGQLEERFKHLEQARKAYDTGLKHCPHC). The stretch at 926–959 (PHVTIAVAKLFWQDKKVEKARAWFERAVTVGPDI) is one TPR 3 repeat.

In terms of assembly, component of a pre-mRNA splicing complex. Interacts with ZOP1. Interacts with PRP31. As to expression, ubiquitous.

It is found in the nucleus. The protein resides in the cajal body. Its function is as follows. Pre-mRNA splicing factor required for splicing and for the turnover of unstable transcripts. May be a U5 snRNP-associated protein involved in the formation of U4/U6-U5 tri-snRNP. Involved in responses to abiotic stresses. Involved in microRNAs (miRNAs) biogenesis by functioning in primary miRNAs (pri-miRNAs) splicing. Required for DNA methylation and transcriptional silencing through the RNA-directed DNA methylation (RdDM) pathway. In Arabidopsis thaliana (Mouse-ear cress), this protein is Protein STABILIZED1 (STA1).